Consider the following 253-residue polypeptide: MRILISNDDGIYADGIGQLRKAMETIASEVYVVAPDRERSACGHGITVTRPLRAKVHPFKSGHAKGWVIDGTPADCVKLGLESLLENPPDLVVSGINLGPNLGTDVLYSGTVSAAYEAIINHVPAIAVSLAAWEELNYQVAADFMKDFIPMLKEHPMGEGMLLNINIPNNYNGRGIKVTRLGRRRYIKCFDKRVDPRGKTYFWMAGEPQNLDDDDPETDAAAVNDGYVSVTPLHLDLTDYSYKKKLAGWLPTK.

Residues Asp8, Asp9, Ser40, and Asn97 each contribute to the a divalent metal cation site.

It belongs to the SurE nucleotidase family. A divalent metal cation serves as cofactor.

Its subcellular location is the cytoplasm. The catalysed reaction is a ribonucleoside 5'-phosphate + H2O = a ribonucleoside + phosphate. Its function is as follows. Nucleotidase that shows phosphatase activity on nucleoside 5'-monophosphates. This chain is 5'-nucleotidase SurE, found in Desulforamulus reducens (strain ATCC BAA-1160 / DSM 100696 / MI-1) (Desulfotomaculum reducens).